A 515-amino-acid chain; its full sequence is 2-isopropylmalate synthase (515 aa).

The Pyruvate carboxyltransferase domain occupies 4–266 (ISVFDTTLRD…ETGLILKEIK (263 aa)). Mn(2+) contacts are provided by Asp13, His201, His203, and Asn237. Residues 391-515 (ELQTLQVNYG…AEVYGSKVEV (125 aa)) form a regulatory domain region.

Belongs to the alpha-IPM synthase/homocitrate synthase family. LeuA type 1 subfamily. As to quaternary structure, homodimer. It depends on Mn(2+) as a cofactor.

It is found in the cytoplasm. The enzyme catalyses 3-methyl-2-oxobutanoate + acetyl-CoA + H2O = (2S)-2-isopropylmalate + CoA + H(+). It functions in the pathway amino-acid biosynthesis; L-leucine biosynthesis; L-leucine from 3-methyl-2-oxobutanoate: step 1/4. Its function is as follows. Catalyzes the condensation of the acetyl group of acetyl-CoA with 3-methyl-2-oxobutanoate (2-ketoisovalerate) to form 3-carboxy-3-hydroxy-4-methylpentanoate (2-isopropylmalate). The polypeptide is 2-isopropylmalate synthase (Halalkalibacterium halodurans (strain ATCC BAA-125 / DSM 18197 / FERM 7344 / JCM 9153 / C-125) (Bacillus halodurans)).